The following is a 196-amino-acid chain: Regulator of G-protein signaling 1 (196 aa).

Positions 1–27 (MPGMFFSANPKDLKGTDQSLLDDKTQK) are disordered. Basic and acidic residues predominate over residues 11-25 (KDLKGTDQSLLDDKT). Residues 72 to 187 (SLEKLLANQT…LKSNIYLNLL (116 aa)) enclose the RGS domain.

Interacts with GNAI1 and GNAQ.

The protein resides in the cell membrane. Its subcellular location is the cytoplasm. The protein localises to the cytosol. In terms of biological role, regulates G protein-coupled receptor signaling cascades, including signaling downstream of the N-formylpeptide chemoattractant receptors and leukotriene receptors. Inhibits B cell chemotaxis toward CXCL12. Inhibits signal transduction by increasing the GTPase activity of G protein alpha subunits, thereby driving them into their inactive GDP-bound form. In Equus caballus (Horse), this protein is Regulator of G-protein signaling 1 (RGS1).